We begin with the raw amino-acid sequence, 91 residues long: Acylphosphatase (91 aa).

Positions 5 to 91 (CLHAYVGGRV…QGIAGFIVRR (87 aa)) constitute an Acylphosphatase-like domain. Active-site residues include Arg-20 and Asn-38.

The protein belongs to the acylphosphatase family.

The enzyme catalyses an acyl phosphate + H2O = a carboxylate + phosphate + H(+). The polypeptide is Acylphosphatase (acyP) (Pseudomonas paraeruginosa (strain DSM 24068 / PA7) (Pseudomonas aeruginosa (strain PA7))).